The chain runs to 227 residues: 3,4-dihydroxy-2-butanone 4-phosphate synthase (227 aa).

D-ribulose 5-phosphate contacts are provided by residues 45–46 (RE), D50, 158–162 (RRGHT), and E182. Residue E46 participates in Mg(2+) binding. H161 is a Mg(2+) binding site.

This sequence belongs to the DHBP synthase family. In terms of assembly, homodimer. Requires Mg(2+) as cofactor. Mn(2+) serves as cofactor.

It carries out the reaction D-ribulose 5-phosphate = (2S)-2-hydroxy-3-oxobutyl phosphate + formate + H(+). Its pathway is cofactor biosynthesis; riboflavin biosynthesis; 2-hydroxy-3-oxobutyl phosphate from D-ribulose 5-phosphate: step 1/1. Catalyzes the conversion of D-ribulose 5-phosphate to formate and 3,4-dihydroxy-2-butanone 4-phosphate. This chain is 3,4-dihydroxy-2-butanone 4-phosphate synthase, found in Ralstonia nicotianae (strain ATCC BAA-1114 / GMI1000) (Ralstonia solanacearum).